Reading from the N-terminus, the 213-residue chain is Protein Syd (213 aa).

The protein belongs to the Syd family.

It localises to the cell inner membrane. In terms of biological role, interacts with the SecY protein in vivo. May bind preferentially to an uncomplexed state of SecY, thus functioning either as a chelating agent for excess SecY in the cell or as a regulatory factor that negatively controls the translocase function. The sequence is that of Protein Syd from Shewanella halifaxensis (strain HAW-EB4).